Here is a 738-residue protein sequence, read N- to C-terminus: Catalase-peroxidase (738 aa).

The segment covering 1-16 has biased composition (basic and acidic residues); it reads MSENHDAIVTDAKTEE. Positions 1 to 37 are disordered; it reads MSENHDAIVTDAKTEEAGGCPVAHGRAPHPTQGGGNR. Positions 108 to 231 form a cross-link, tryptophyl-tyrosyl-methioninium (Trp-Tyr) (with M-257); the sequence is WHSAGTYRIS…LGAVQMGLIY (124 aa). The Proton acceptor role is filled by histidine 109. A cross-link (tryptophyl-tyrosyl-methioninium (Tyr-Met) (with W-108)) is located at residues 231–257; the sequence is YVNPEGPNGNPDPIAAARDIRETFGRM. Histidine 272 provides a ligand contact to heme b.

The protein belongs to the peroxidase family. Peroxidase/catalase subfamily. As to quaternary structure, homodimer or homotetramer. Heme b is required as a cofactor. Formation of the three residue Trp-Tyr-Met cross-link is important for the catalase, but not the peroxidase activity of the enzyme.

It carries out the reaction H2O2 + AH2 = A + 2 H2O. The enzyme catalyses 2 H2O2 = O2 + 2 H2O. Functionally, bifunctional enzyme with both catalase and broad-spectrum peroxidase activity. This is Catalase-peroxidase from Streptomyces ambofaciens.